A 364-amino-acid polypeptide reads, in one-letter code: Mannose-1-phosphate guanyltransferase (364 aa).

The protein belongs to the transferase hexapeptide repeat family.

Its subcellular location is the cytoplasm. It catalyses the reaction alpha-D-mannose 1-phosphate + GTP + H(+) = GDP-alpha-D-mannose + diphosphate. It participates in nucleotide-sugar biosynthesis; GDP-alpha-D-mannose biosynthesis; GDP-alpha-D-mannose from alpha-D-mannose 1-phosphate (GTP route): step 1/1. In terms of biological role, involved in cell wall synthesis where it is required for glycosylation. Involved in cell cycle progression through cell-size checkpoint. The sequence is that of Mannose-1-phosphate guanyltransferase (mpg1) from Emericella nidulans (strain FGSC A4 / ATCC 38163 / CBS 112.46 / NRRL 194 / M139) (Aspergillus nidulans).